The primary structure comprises 96 residues: Cytochrome c oxidase assembly factor 3 homolog, mitochondrial (96 aa).

Topologically, residues Met1–Arg50 are mitochondrial matrix. The helical transmembrane segment at Asn51–Val73 threads the bilayer. Over Ser74–Asn96 the chain is Mitochondrial intermembrane.

It belongs to the COA3 family. As to quaternary structure, core component of the MITRAC (mitochondrial translation regulation assembly intermediate of cytochrome c oxidase complex) complex.

It localises to the mitochondrion inner membrane. Its function is as follows. Core component of the MITRAC (mitochondrial translation regulation assembly intermediate of cytochrome c oxidase complex) complex, that regulates cytochrome c oxidase assembly. MITRAC complexes regulate both translation of mitochondrial encoded components and assembly of nuclear-encoded components imported in mitochondrion. Required for efficient translation of MT-CO1 and mitochondrial respiratory chain complex IV assembly. The sequence is that of Cytochrome c oxidase assembly factor 3 homolog, mitochondrial (coa3a) from Danio rerio (Zebrafish).